We begin with the raw amino-acid sequence, 1027 residues long: Presequence protease, mitochondrial (1027 aa).

The N-terminal 22 residues, 1–22, are a transit peptide targeting the mitochondrion; it reads MIRQCRAGLRLCRALYQTSYRW. Residue H98 participates in Zn(2+) binding. E101 serves as the catalytic Proton acceptor. 2 residues coordinate Zn(2+): H102 and E199. An intrachain disulfide couples C113 to C550. A disordered region spans residues 800 to 829; that stretch reads KKERKSIRPHVVEKSSSPSSSGSEISRRAT. The segment covering 814-823 has biased composition (low complexity); it reads SSSPSSSGSE.

This sequence belongs to the peptidase M16 family. PreP subfamily. Monomer and homodimer; homodimerization is induced by binding of the substrate. Requires Zn(2+) as cofactor. Post-translationally, a disulfide bond locks the enzyme in the closed conformation preventing substrate entry into the catalytic chamber.

It localises to the mitochondrion matrix. Its activity is regulated as follows. Mainly exists in a closed and catalytically competent conformation but a closed-to-open switch allows substrate entry into the catalytic chamber. Substrate binding induces closure and dimerization. A disulfide bond may lock the enzyme in a closed conformation preventing substrate entry into the catalytic chamber, participating in redox regulation of the enzyme. Inhibited by metal-chelating agents. Inhibited by nickel and zinc excess, and slightly activated by manganese. Metalloendopeptidase of the mitochondrial matrix that functions in peptide cleavage and degradation rather than in protein processing. Has an ATP-independent activity. Specifically cleaves peptides in the range of 5 to 65 residues. Shows a preference for cleavage after small polar residues and before basic residues, but without any positional preference. Degrades the transit peptides of mitochondrial proteins after their cleavage. Also degrades other unstructured peptides. The sequence is that of Presequence protease, mitochondrial (pitrm1) from Xenopus tropicalis (Western clawed frog).